We begin with the raw amino-acid sequence, 142 residues long: Coactosin-like protein (142 aa).

A2 is modified (N-acetylalanine). Positions 2–130 constitute an ADF-H domain; that stretch reads ATKIDKEACR…EEDFIKNELK (129 aa). The interval 66–75 is flexible and important for F-actin binding; it reads TGDAMSKRSK. Residues K102 and K126 each carry the N6-acetyllysine modification.

Belongs to the actin-binding proteins ADF family. Coactosin subfamily. As to quaternary structure, interacts with 5-lipoxygenase (ALOX5/5LO) in a calcium-independent manner. Binds to F-actin with a stoichiometry of 1:2.

Its subcellular location is the cytoplasm. It localises to the cytoskeleton. The protein localises to the nucleus. In terms of biological role, binds to F-actin in a calcium-independent manner. Has no direct effect on actin depolymerization. Acts as a chaperone for ALOX5 (5LO), influencing both its stability and activity in leukotrienes synthesis. The polypeptide is Coactosin-like protein (COTL1) (Bos taurus (Bovine)).